The sequence spans 1116 residues: Pleckstrin homology domain-containing family A member 5 (1116 aa).

Residue Ala2 is modified to N-acetylalanine. In terms of domain architecture, WW 1 spans 10–43; that stretch reads ISLPRSWTYGITRGGRVFFINEEAKSTTWLHPVT. Residue Ser55 is modified to Phosphoserine. Residues 56–89 form the WW 2 domain; it reads TDLPTGWEEAYTFEGARYYINHNERKVTCKHPVT. The disordered stretch occupies residues 140–163; that stretch reads SPVGRTSRASKKVHNFGKRSNSIK. Residues 147-156 are compositionally biased toward basic residues; it reads RASKKVHNFG. Residues 169–268 enclose the PH domain; it reads PVVRRGWLYK…WMKAMLDAAL (100 aa). Lys301 is covalently cross-linked (Glycyl lysine isopeptide (Lys-Gly) (interchain with G-Cter in SUMO2)). Ser382 and Ser410 each carry phosphoserine. Thr438 and Thr460 each carry phosphothreonine. Positions 459 to 495 are disordered; that stretch reads RTLPRNSKTRPESICSVTPSTHDKTLGPGAEEKRRSM. Residues 479-495 show a composition bias toward basic and acidic residues; sequence THDKTLGPGAEEKRRSM. A phosphoserine mark is found at Ser568, Ser607, Ser809, Ser855, Ser933, and Ser937. Disordered regions lie at residues 928-978 and 1025-1116; these read GASD…PATE and RNKD…FMCV. Residues 930-949 are compositionally biased toward polar residues; it reads SDQSPLQSPSNLRDNPFRTT. A compositionally biased stretch (basic and acidic residues) spans 952–978; that stretch reads RRRDDKELDTAIRENDVKPDHETPATE. Residues 1036–1046 are compositionally biased toward polar residues; it reads FSPQDETQTAN. A compositionally biased stretch (basic and acidic residues) spans 1047–1061; that stretch reads HKPEEHPEENTKNSV. A compositionally biased stretch (polar residues) spans 1070 to 1085; it reads SYESTPEVSRGNQTMA. Positions 1088–1101 are enriched in low complexity; it reads SLSPSPESSASPVP.

As to expression, highly expressed in heart and kidney.

The protein localises to the cytoplasm. The polypeptide is Pleckstrin homology domain-containing family A member 5 (PLEKHA5) (Homo sapiens (Human)).